Reading from the N-terminus, the 110-residue chain is UPF0060 membrane protein PFL_4337 (110 aa).

4 helical membrane-spanning segments follow: residues leucine 5 to leucine 25, alanine 31 to valine 51, alanine 59 to glutamate 79, and leucine 84 to glycine 104.

The protein belongs to the UPF0060 family.

The protein resides in the cell inner membrane. The chain is UPF0060 membrane protein PFL_4337 from Pseudomonas fluorescens (strain ATCC BAA-477 / NRRL B-23932 / Pf-5).